Consider the following 506-residue polypeptide: Procardosin-B (506 aa).

An N-terminal signal peptide occupies residues 1-24 (MGTPIKASLLALFLFFLLSPTAFS). The propeptide occupies 25–70 (VSNGGLLRVGLKKRKVDRLDQLRAHGVHMLGNARKDFGFRRTLSDS). A Peptidase A1 domain is found at 85–503 (YYGEIGIGTP…DYGKLRVGFA (419 aa)). Asp103 is an active-site residue. An intrachain disulfide couples Cys116 to Cys122. N-linked (GlcNAc...) asparagine glycans are attached at residues Asn139 and Asn252. Cys281 and Cys285 are joined by a disulfide. Asp290 is an active-site residue. The 103-residue stretch at 315–417 (VLNQQCKTLV…NEVCDQLPTS (103 aa)) folds into the Saposin B-type domain. 4 disulfides stabilise this stretch: Cys320-Cys411, Cys345-Cys383, Cys351-Cys380, and Cys425-Cys462. Asn397 is a glycosylation site (N-linked (GlcNAc...) asparagine).

This sequence belongs to the peptidase A1 family. In terms of assembly, heterodimer of a light chain and a heavy chain. An intermediate form is produced first, and undergoes proteolytic processing to remove the internal plant-specific insert (PSI) and the propeptide. In terms of tissue distribution, detected in pistils, but not in seeds, bracts, midribs, roots, leaves or stamen extracts. Detected in seeds. In stigmas and styles, detected in the transmitting tissue and in contiguous subepidermal layers at the longitudenal grooves of the stigma (at protein level).

The protein resides in the microsome membrane. Its subcellular location is the protein storage vacuole. It localises to the secreted. It is found in the cell wall. The protein localises to the extracellular space. The protein resides in the extracellular matrix. With respect to regulation, inhibited by the specific aspartic proteinase inhibitors diazoacetyl-noleucine methyl ester and pepstatin. Aspartic protease. Cleaves alpha-lactalbumin but not beta-lactoglobulin. This chain is Procardosin-B, found in Cynara cardunculus (Cardoon).